Consider the following 515-residue polypeptide: Cytidine and dCMP deaminase domain-containing protein 1 (515 aa).

Polar residues-rich tracts occupy residues 1-11 and 18-27; these read MKEAGQMQNLE and SVSTQTGSMT. 2 disordered regions span residues 1–27 and 56–83; these read MKEA…GSMT and RQKS…STDK. Residues 60 to 83 are compositionally biased toward basic and acidic residues; that stretch reads QKNEEGKHGPLGDNEEMTRVSTDK. The CMP/dCMP-type deaminase 1 domain occupies 71–169; that stretch reads GDNEEMTRVS…SLLTEASSSE (99 aa). H110, C135, and C138 together coordinate Zn(2+). The Nuclear export signal motif lies at 272-284; the sequence is NLRQNMKDLILLL. The region spanning 318 to 483 is the CMP/dCMP-type deaminase 2 domain; that stretch reads EIARHCMVQA…LNPSGAYGLE (166 aa). Residue H399 coordinates Zn(2+). E401 acts as the Proton donor in catalysis. C427 and C430 together coordinate Zn(2+). The Bipartite nuclear localization signal signature appears at 489 to 511; the sequence is RRENGVLRPVPQKEEQHQDKKLC. The tract at residues 494 to 515 is disordered; that stretch reads VLRPVPQKEEQHQDKKLCLGIH.

This sequence belongs to the cytidine and deoxycytidylate deaminase family. Zn(2+) is required as a cofactor.

The protein resides in the cytoplasm. Its subcellular location is the nucleus. The enzyme catalyses 2'-deoxycytidine + H2O + H(+) = 2'-deoxyuridine + NH4(+). The catalysed reaction is cytidine + H2O + H(+) = uridine + NH4(+). Functionally, catalyzes the deamination of cytidine and deoxycytidine into uridine and deoxyuridine, respectively. May play an important role in testicular development and spermatogenesis. The protein is Cytidine and dCMP deaminase domain-containing protein 1 (CDADC1) of Pongo abelii (Sumatran orangutan).